We begin with the raw amino-acid sequence, 726 residues long: Catalase-peroxidase (726 aa).

The tract at residues 1 to 33 (MSTTDDTHNTLSAGKCPFHQGGHDRSAGAGTAS) is disordered. Residues 105–226 (WHGAGTYRSI…LGATEMGLIY (122 aa)) constitute a cross-link (tryptophyl-tyrosyl-methioninium (Trp-Tyr) (with M-252)). Histidine 106 (proton acceptor) is an active-site residue. The tryptophyl-tyrosyl-methioninium (Tyr-Met) (with W-105) cross-link spans 226 to 252 (YVNPEGPDHSGEPLSAAAAIRATFGNM). Heme b is bound at residue histidine 267.

The protein belongs to the peroxidase family. Peroxidase/catalase subfamily. In terms of assembly, homodimer or homotetramer. Heme b serves as cofactor. Post-translationally, formation of the three residue Trp-Tyr-Met cross-link is important for the catalase, but not the peroxidase activity of the enzyme.

The enzyme catalyses H2O2 + AH2 = A + 2 H2O. The catalysed reaction is 2 H2O2 = O2 + 2 H2O. In terms of biological role, bifunctional enzyme with both catalase and broad-spectrum peroxidase activity. The chain is Catalase-peroxidase from Salmonella arizonae (strain ATCC BAA-731 / CDC346-86 / RSK2980).